The primary structure comprises 588 residues: Succinate dehydrogenase flavoprotein subunit (588 aa).

FAD is bound by residues glycine 14 to glycine 19, serine 37 to glycine 52, and aspartate 221. Histidine 45 carries the post-translational modification Tele-8alpha-FAD histidine. 2 residues coordinate substrate: histidine 242 and threonine 254. Arginine 286 serves as the catalytic Proton acceptor. Histidine 354 contacts substrate. Residue glutamate 388 participates in FAD binding. Arginine 399 is a substrate binding site. Serine 404 to leucine 405 serves as a coordination point for FAD.

The protein belongs to the FAD-dependent oxidoreductase 2 family. FRD/SDH subfamily. In terms of assembly, part of an enzyme complex containing four subunits: a flavoprotein, an iron-sulfur, cytochrome b-556, and a hydrophobic anchor protein. The cofactor is FAD.

The protein localises to the cell inner membrane. The enzyme catalyses a quinone + succinate = fumarate + a quinol. Its pathway is carbohydrate metabolism; tricarboxylic acid cycle; fumarate from succinate (bacterial route): step 1/1. Two distinct, membrane-bound, FAD-containing enzymes are responsible for the catalysis of fumarate and succinate interconversion; the fumarate reductase is used in anaerobic growth, and the succinate dehydrogenase is used in aerobic growth. This Salmonella typhimurium (strain LT2 / SGSC1412 / ATCC 700720) protein is Succinate dehydrogenase flavoprotein subunit (sdhA).